We begin with the raw amino-acid sequence, 205 residues long: MLLSPAAERSQGSLLSVIMEILKDQSHRELFGLELGSGTGQHVVHFAQEMPFVTWLPSDTKEESRNSIRAYIEATKAKTVLEPVHLDASEPWDKWAGLPQNSCDIILAINLLQYTPFSTAEGVFKGSGQILKQNGLLMTYGPYAINGTITPICNEQLDETLRQMNPEWGLPDIDVLRQLAFSNGMRMERMIEMPESNKCLVFRKL.

The protein belongs to the UPF0585 family.

The sequence is that of Methyltransferase-like 26 B from Danio rerio (Zebrafish).